Reading from the N-terminus, the 184-residue chain is Shikimate kinase (184 aa).

15 to 20 provides a ligand contact to ATP; the sequence is GAGKTS. Thr-19 contacts Mg(2+). Positions 37, 61, and 83 each coordinate substrate. Arg-123 lines the ATP pocket. Residue Arg-142 coordinates substrate.

It belongs to the shikimate kinase family. In terms of assembly, monomer. Mg(2+) serves as cofactor.

It is found in the cytoplasm. The enzyme catalyses shikimate + ATP = 3-phosphoshikimate + ADP + H(+). Its pathway is metabolic intermediate biosynthesis; chorismate biosynthesis; chorismate from D-erythrose 4-phosphate and phosphoenolpyruvate: step 5/7. Its function is as follows. Catalyzes the specific phosphorylation of the 3-hydroxyl group of shikimic acid using ATP as a cosubstrate. In Coxiella burnetii (strain CbuK_Q154) (Coxiella burnetii (strain Q154)), this protein is Shikimate kinase.